Here is a 144-residue protein sequence, read N- to C-terminus: 3-hydroxyacyl-[acyl-carrier-protein] dehydratase FabZ (144 aa).

His-48 is a catalytic residue.

Belongs to the thioester dehydratase family. FabZ subfamily.

The protein resides in the cytoplasm. It carries out the reaction a (3R)-hydroxyacyl-[ACP] = a (2E)-enoyl-[ACP] + H2O. Its function is as follows. Involved in unsaturated fatty acids biosynthesis. Catalyzes the dehydration of short chain beta-hydroxyacyl-ACPs and long chain saturated and unsaturated beta-hydroxyacyl-ACPs. The chain is 3-hydroxyacyl-[acyl-carrier-protein] dehydratase FabZ from Bacillus cereus (strain AH187).